We begin with the raw amino-acid sequence, 155 residues long: MHTFEGDLVAENITIGIVVARFNEFITSKLLAGALDTLKRENVREQDIAVAWVPGAFEIPLIASRMAKSKRYDAIICLGAVIRGSTSHYDYVCNEVSKGIAQTSLDTGVPVLFGVLTTDSIEQAIERAGTKAGNKGSECAQGAIEMVNLIRSMDL.

Residues phenylalanine 22, 56–58, and 80–82 contribute to the 5-amino-6-(D-ribitylamino)uracil site; these read AFE and AVI. (2S)-2-hydroxy-3-oxobutyl phosphate is bound at residue 85–86; it reads ST. Catalysis depends on histidine 88, which acts as the Proton donor. Phenylalanine 113 is a binding site for 5-amino-6-(D-ribitylamino)uracil. Arginine 127 contacts (2S)-2-hydroxy-3-oxobutyl phosphate.

The protein belongs to the DMRL synthase family.

The enzyme catalyses (2S)-2-hydroxy-3-oxobutyl phosphate + 5-amino-6-(D-ribitylamino)uracil = 6,7-dimethyl-8-(1-D-ribityl)lumazine + phosphate + 2 H2O + H(+). The protein operates within cofactor biosynthesis; riboflavin biosynthesis; riboflavin from 2-hydroxy-3-oxobutyl phosphate and 5-amino-6-(D-ribitylamino)uracil: step 1/2. Functionally, catalyzes the formation of 6,7-dimethyl-8-ribityllumazine by condensation of 5-amino-6-(D-ribitylamino)uracil with 3,4-dihydroxy-2-butanone 4-phosphate. This is the penultimate step in the biosynthesis of riboflavin. This Bifidobacterium longum subsp. infantis (strain ATCC 15697 / DSM 20088 / JCM 1222 / NCTC 11817 / S12) protein is 6,7-dimethyl-8-ribityllumazine synthase.